Reading from the N-terminus, the 447-residue chain is Trigger factor (447 aa).

Residues 188–273 (GDKLVIDFEG…VNDIQVAEDF (86 aa)) form the PPIase FKBP-type domain.

Belongs to the FKBP-type PPIase family. Tig subfamily.

The protein resides in the cytoplasm. It carries out the reaction [protein]-peptidylproline (omega=180) = [protein]-peptidylproline (omega=0). In terms of biological role, involved in protein export. Acts as a chaperone by maintaining the newly synthesized protein in an open conformation. Functions as a peptidyl-prolyl cis-trans isomerase. The protein is Trigger factor of Wolbachia sp. subsp. Brugia malayi (strain TRS).